We begin with the raw amino-acid sequence, 692 residues long: MNTAITATTPTEYSYNDRYINRELSILDFHLRVLEQAVDPLHPLLERMNFLLIFSRNLDEFFEIRVAGVMEQFALGNESRSPDGLTPRQVLQKISETAHTAIERQYRILNEEILPKLREEDICFLRRGELTPAQSAWVKKYFQEQVAPVLTPISLDPAHPFPRLVNKSLNFIVTLEGKDAFGRQIDLAVVPAPRSLPRVVRLPDELTGGKEHHVMLSAIIHEHVSDLFPGMTATGCYQFRVTRNADLALNEDVEDLAKALKGELSSRRFGRAVRLEVTQNCPQHIYEYLLEEFDLNEEQLYKVDGPVNLARLVSNFKRPHLRYDSHTPVVPKVFKKTESIFSAMQKQDILLHHPFESFAPVIQLLREAARDPQVLAIKQTLYRSGADSEIVQVLAEAARNGKEVTAVIELRARFDEESNIEVANVLQEAGAVVVYGIVGYKTHAKMIMVVRRENNKLVRYVHLGTGNYHAMNARIYTDYGLMTTDKDLCEDVHRIFQELTGMGKMAKLKKLLHAPFTLHAQLINFIDEEIANAKAGRKAQIIVKVNALTEVQLINKLYEASQAGVQVDLIIRSICCLRPGLPNLSENIRVRSIVGRFLEHTRVYYFSNNGDARIYCSSADWMDRNLFNRVEACFPIEDPALKKRIYQQGLLNYLQDNQQAWLLQGDGTWIRAKPAEGEKLHNAQRELLETFK.

Asn57 serves as a coordination point for ATP. Residues Arg383 and Arg413 each contribute to the Mg(2+) site. His443 acts as the Phosphohistidine intermediate in catalysis. ATP contacts are provided by Tyr476, Arg572, and His600.

Belongs to the polyphosphate kinase 1 (PPK1) family. It depends on Mg(2+) as a cofactor. An intermediate of this reaction is the autophosphorylated ppk in which a phosphate is covalently linked to a histidine residue through a N-P bond.

It carries out the reaction [phosphate](n) + ATP = [phosphate](n+1) + ADP. Catalyzes the reversible transfer of the terminal phosphate of ATP to form a long-chain polyphosphate (polyP). The protein is Polyphosphate kinase of Acinetobacter baumannii (strain AYE).